Here is an 889-residue protein sequence, read N- to C-terminus: MLTQEDFRNKYQYHQATPMLQQYLDIKFTHQCCILLFRVGDFYELFFDDAIVVSKLLGLVLAKKGKHAGQDLPMCGIPYHALESYLPRLVEQEHKVALCEQLESPEEAKKRNGYKAVVKREVVRILTSGTITEESLIKANAPNYLAAIVIYKDIASIGYCDVSTAEFIVIDVSIHNLTSELSRINPKEIILSESLQHNSSLLALFDNYKQKIVYQVESYFSFNKAQRTIQNYYEIITIDSIGSLNSTQVSVVGAILEYLSIVQKHSKSKLPFPQIVSYENFMLIDASARKNLELTSTLSGNLKGSLLSVIDATVTNQGGRLLHKFLSTPLAEVNLINSRLQITDFFYQNLQLVENLRELVKLVPDIERALSRILIAKALPKDLESIKISLKIALSIKKELNKVLEEENIPKYLEEIYNPLFGDDELYDLLDSALLDDLSNSANDGGFIKSSYSTKLEELRNLIYNSSHFIEQLKLQYRQETCIETLKICHNNVWGMFIEVSSKNAHKITDSKFVHKQTTTTAVRFTTTELQTLEAKMLNAKTMAAALEQEILAELCKAISLKSEKLSHLAKSISLIDVFCNFAYISHEFNYCRPEITSDLAFNIVNGRHTVIEKLITKKHESFISNDCNLQNDQRIWLITGPNMAGKSTFLRQNAIIVILAQIGCYVPAQSAQIGVVDKLFSRIGAADDLASGQSTFMVEMVETSVILAQSTFRSLVILDEIGRGTSTYDGISIAWSCLEYIHSNIRCRCLFATHYHELVDLASKLQSLKNFTVKIHDSNDKLSFLYKIIEGAANKSYGIHVAELAGLPRIVLNRAKEILLELEHNKADINQSNNNITKSMDIAVPPYPVKTIEIIKQLNPDQLTPKEALSIIYKIKNTILLEEDEKMI.

641–648 contributes to the ATP binding site; sequence GPNMAGKS.

The protein belongs to the DNA mismatch repair MutS family.

Its function is as follows. This protein is involved in the repair of mismatches in DNA. It is possible that it carries out the mismatch recognition step. This protein has a weak ATPase activity. In Orientia tsutsugamushi (strain Ikeda) (Rickettsia tsutsugamushi), this protein is DNA mismatch repair protein MutS.